Here is a 383-residue protein sequence, read N- to C-terminus: Succinyl-diaminopimelate desuccinylase (383 aa).

Histidine 72 contributes to the Zn(2+) binding site. The active site involves aspartate 74. Residue aspartate 105 participates in Zn(2+) binding. The active-site Proton acceptor is glutamate 137. Residues glutamate 138, glutamate 167, and histidine 352 each coordinate Zn(2+).

This sequence belongs to the peptidase M20A family. DapE subfamily. Homodimer. Requires Zn(2+) as cofactor. The cofactor is Co(2+).

It catalyses the reaction N-succinyl-(2S,6S)-2,6-diaminopimelate + H2O = (2S,6S)-2,6-diaminopimelate + succinate. The protein operates within amino-acid biosynthesis; L-lysine biosynthesis via DAP pathway; LL-2,6-diaminopimelate from (S)-tetrahydrodipicolinate (succinylase route): step 3/3. In terms of biological role, catalyzes the hydrolysis of N-succinyl-L,L-diaminopimelic acid (SDAP), forming succinate and LL-2,6-diaminopimelate (DAP), an intermediate involved in the bacterial biosynthesis of lysine and meso-diaminopimelic acid, an essential component of bacterial cell walls. In Ehrlichia ruminantium (strain Welgevonden), this protein is Succinyl-diaminopimelate desuccinylase.